Consider the following 1647-residue polypeptide: Probable ubiquitin fusion degradation protein C12B10.01c (1647 aa).

Polar residues predominate over residues threonine 192–asparagine 209. 2 disordered regions span residues threonine 192 to alanine 288 and glutamate 1039 to serine 1076. Acidic residues-rich tracts occupy residues aspartate 218 to asparagine 228 and glutamate 245 to asparagine 273. Residues glutamate 1039–glycine 1050 are compositionally biased toward low complexity. Polar residues predominate over residues aspartate 1051–threonine 1065. A compositionally biased stretch (basic and acidic residues) spans glutamate 1066 to serine 1076. The tract at residues isoleucine 1183–proline 1257 is K-box. Residues alanine 1294–serine 1647 form the HECT domain. Cysteine 1614 serves as the catalytic Glycyl thioester intermediate.

It belongs to the UPL family. K-HECT subfamily.

It catalyses the reaction S-ubiquitinyl-[E2 ubiquitin-conjugating enzyme]-L-cysteine + [acceptor protein]-L-lysine = [E2 ubiquitin-conjugating enzyme]-L-cysteine + N(6)-ubiquitinyl-[acceptor protein]-L-lysine.. Its function is as follows. E3 ubiquitin-protein ligase which accepts ubiquitin from an E2 ubiquitin-conjugating enzyme in the form of a thioester and then directly transfers the ubiquitin to targeted substrates. In Schizosaccharomyces pombe (strain 972 / ATCC 24843) (Fission yeast), this protein is Probable ubiquitin fusion degradation protein C12B10.01c.